A 504-amino-acid polypeptide reads, in one-letter code: Chorion-specific transcription factor GCMb (504 aa).

The segment at residues 19 to 174 (LTWDINDPQM…KSETEGRRSA (156 aa)) is a DNA-binding region (GCM). Residues C81, C87, C91, C118, C121, C130, H157, and H159 each coordinate Zn(2+). Composition is skewed to basic and acidic residues over residues 155-172 (GVHD…EGRR) and 188-203 (RRSE…DIRG). The tract at residues 155-203 (GVHDHPRPESKSETEGRRSALKRQMASFYQPQKRRSEEPEARSTQDIRG) is disordered. The interval 379–393 (LQTVITTTVAYQAYQ) is C-terminal conserved inhibitory domain (CCID). A disordered region spans residues 438–472 (ASPSGRAPLKVPGDCQAPRPTLDFPQEADPSGTDG).

The protein resides in the nucleus. Transcription factor that binds specific sequences on gene promoters and activate their transcription. Through the regulation of gene transcription, may play a role in parathyroid gland development. This chain is Chorion-specific transcription factor GCMb, found in Mus musculus (Mouse).